The primary structure comprises 402 residues: Phytoene synthase 2, chloroplastic (402 aa).

The transit peptide at 1 to 54 (MAAGSSAVWAAQHPACSGGKFHHLSPSHSHCRPRRALQTPPALPARRSGASPPR) directs the protein to the chloroplast. Residues 20 to 35 (KFHHLSPSHSHCRPRR) show a composition bias toward basic residues. A disordered region spans residues 20–54 (KFHHLSPSHSHCRPRRALQTPPALPARRSGASPPR). A compositionally biased stretch (low complexity) spans 44-54 (PARRSGASPPR).

This sequence belongs to the phytoene/squalene synthase family. Expressed in leaves and endosperm.

It localises to the plastid. Its subcellular location is the chloroplast. It is found in the plastoglobule. It catalyses the reaction 2 (2E,6E,10E)-geranylgeranyl diphosphate = 15-cis-phytoene + 2 diphosphate. Functionally, catalyzes the conversion of geranylgeranyl diphosphate to phytoene. Mediates the first committed step in carotenoid biosynthesis. The chain is Phytoene synthase 2, chloroplastic from Zea mays (Maize).